The chain runs to 304 residues: Ribonuclease Z (304 aa).

Residues His63, His65, Asp67, His68, His143, Asp213, and His271 each coordinate Zn(2+). Asp67 (proton acceptor) is an active-site residue.

The protein belongs to the RNase Z family. In terms of assembly, homodimer. The cofactor is Zn(2+).

It catalyses the reaction Endonucleolytic cleavage of RNA, removing extra 3' nucleotides from tRNA precursor, generating 3' termini of tRNAs. A 3'-hydroxy group is left at the tRNA terminus and a 5'-phosphoryl group is left at the trailer molecule.. Zinc phosphodiesterase, which displays some tRNA 3'-processing endonuclease activity. Probably involved in tRNA maturation, by removing a 3'-trailer from precursor tRNA. In Bacteroides fragilis (strain YCH46), this protein is Ribonuclease Z.